Consider the following 570-residue polypeptide: Set1/Ash2 histone methyltransferase complex subunit ash-2 (570 aa).

The segment at 19–76 (TTVCYCDGKRELGSVEVVCSTCLKWFHGRCLKEFHELNSNGVPFMICYTFTCKQCRPT) adopts a PHD-type zinc-finger fold. A disordered region spans residues 201 to 242 (NREPRHIELPPIEGPKTRGASKRRHAEAPVTGKKQKLAADYS). A B30.2/SPRY domain is found at 270 to 468 (PNVPEDPAWN…TLVEMPGSYI (199 aa)).

As to quaternary structure, component of the SET2 complex (also known as the SET1/COMPASS complex), which contains at least set-2, swd-2.1, cfp-1, rbbp-5, wdr-5.1, dpy-30 and ash-2. Within the complex, interacts with cfp-1 and wdr-5.1. Expressed in somatic and germline tissues (at protein level).

It localises to the nucleus. In terms of biological role, component of the set-2/ash-2 histone methyltransferase (HMT) complex. Required for the di- and trimethylation at 'Lys-4' of histone H3, a mark associated with epigenetic transcriptional activation. Implicated in the epigenetic inheritance of lifespan over several generations. Functions as a transcriptional regulator. Acts in the germline to limit the longevity of the soma, probably by regulating a lipid metabolism pathway that signals from the germline to the intestine, thereby preventing accumulation of mono-unsaturated fatty acids. The polypeptide is Set1/Ash2 histone methyltransferase complex subunit ash-2 (Caenorhabditis elegans).